The chain runs to 332 residues: Large ribosomal subunit protein mL44 (332 aa).

The N-terminal 30 residues, 1–30 (MASGLVRLLQQGPRCLLAPVAPKLVPPVRG), are a transit peptide targeting the mitochondrion. The 143-residue stretch at 86–228 (DLLKTAFVNS…LITQMTGKEL (143 aa)) folds into the RNase III domain. A DRBM domain is found at 236-306 (NPMGLLVEEL…ARVALRKLYG (71 aa)).

This sequence belongs to the ribonuclease III family. Mitochondrion-specific ribosomal protein mL44 subfamily. In terms of assembly, component of the mitochondrial ribosome large subunit (39S) which comprises a 16S rRNA and about 50 distinct proteins.

It is found in the mitochondrion. Its function is as follows. Component of the 39S subunit of mitochondrial ribosome. May have a function in the assembly/stability of nascent mitochondrial polypeptides exiting the ribosome. The sequence is that of Large ribosomal subunit protein mL44 (MRPL44) from Pongo abelii (Sumatran orangutan).